The sequence spans 206 residues: 2,3-bisphosphoglycerate-dependent phosphoglycerate mutase (206 aa).

Substrate is bound by residues 9–16 (RHGQSEWN), 22–23 (TG), R61, 88–91 (ERNY), K99, 115–116 (RR), and 159–160 (GN). H10 (tele-phosphohistidine intermediate) is an active-site residue. E88 acts as the Proton donor/acceptor in catalysis.

It belongs to the phosphoglycerate mutase family. BPG-dependent PGAM subfamily. In terms of assembly, homodimer.

It carries out the reaction (2R)-2-phosphoglycerate = (2R)-3-phosphoglycerate. It participates in carbohydrate degradation; glycolysis; pyruvate from D-glyceraldehyde 3-phosphate: step 3/5. Functionally, catalyzes the interconversion of 2-phosphoglycerate and 3-phosphoglycerate. The sequence is that of 2,3-bisphosphoglycerate-dependent phosphoglycerate mutase from Bartonella henselae (strain ATCC 49882 / DSM 28221 / CCUG 30454 / Houston 1) (Rochalimaea henselae).